The primary structure comprises 271 residues: Regulatory protein RecX (271 aa).

The protein belongs to the RecX family.

The protein resides in the cytoplasm. In terms of biological role, modulates RecA activity. The sequence is that of Regulatory protein RecX from Lactobacillus delbrueckii subsp. bulgaricus (strain ATCC 11842 / DSM 20081 / BCRC 10696 / JCM 1002 / NBRC 13953 / NCIMB 11778 / NCTC 12712 / WDCM 00102 / Lb 14).